Here is a 572-residue protein sequence, read N- to C-terminus: Urease subunit alpha (572 aa).

One can recognise a Urease domain in the interval 134–572 (GGIDSHIHFI…LPLAQRYFLF (439 aa)). Ni(2+) contacts are provided by histidine 139, histidine 141, and lysine 222. Lysine 222 carries the N6-carboxylysine modification. Histidine 224 lines the substrate pocket. Ni(2+) contacts are provided by histidine 251 and histidine 277. The active-site Proton donor is the histidine 325. Ni(2+) is bound at residue aspartate 365.

It belongs to the metallo-dependent hydrolases superfamily. Urease alpha subunit family. As to quaternary structure, heterotrimer of UreA (gamma), UreB (beta) and UreC (alpha) subunits. Three heterotrimers associate to form the active enzyme. Ni cation serves as cofactor. In terms of processing, carboxylation allows a single lysine to coordinate two nickel ions.

It is found in the cytoplasm. It catalyses the reaction urea + 2 H2O + H(+) = hydrogencarbonate + 2 NH4(+). Its pathway is nitrogen metabolism; urea degradation; CO(2) and NH(3) from urea (urease route): step 1/1. In Paracidovorax citrulli (strain AAC00-1) (Acidovorax citrulli), this protein is Urease subunit alpha.